A 664-amino-acid chain; its full sequence is Xyloglucan-specific galacturonosyltransferase 1 (664 aa).

Residues 1 to 21 (MSLSKHLQKLVHKRESKKQPN) are compositionally biased toward basic residues. The disordered stretch occupies residues 1–49 (MSLSKHLQKLVHKRESKKQPNKKMPVSVSKLRRPRTSKKTETGNPEKTL). The Cytoplasmic portion of the chain corresponds to 1-71 (MSLSKHLQKL…IFSARSFLYR (71 aa)). A helical; Signal-anchor for type II membrane protein membrane pass occupies residues 72–92 (VPLTILFLFLIYLWSTSTTVI). Residues 93–664 (SGNVVHICIS…SLFKKIAKTV (572 aa)) are Lumenal-facing. Asn126, Asn158, Asn175, Asn181, Asn355, Asn379, and Asn522 each carry an N-linked (GlcNAc...) asparagine glycan.

This sequence belongs to the glycosyltransferase 47 family. As to expression, root hair specific. Expressed in roots and young leaves.

The protein localises to the golgi apparatus membrane. Its function is as follows. Xyloglucan-specific galacturonosyltransferase that forms the beta-D-galactosyluronic acid-(1-&gt;2)-alpha-D-xylosyl linkage. Required for root hair development probably by providing important acidic xyloglucans. The sequence is that of Xyloglucan-specific galacturonosyltransferase 1 from Arabidopsis thaliana (Mouse-ear cress).